The following is a 373-amino-acid chain: GTP cyclohydrolase 1 type 2 homolog (373 aa).

Residues His-67, His-68, Asp-106, His-333, and Glu-336 each coordinate a divalent metal cation.

This sequence belongs to the GTP cyclohydrolase I type 2/NIF3 family. In terms of assembly, homohexamer.

The polypeptide is GTP cyclohydrolase 1 type 2 homolog (Listeria innocua serovar 6a (strain ATCC BAA-680 / CLIP 11262)).